Consider the following 428-residue polypeptide: Adenylosuccinate synthetase (428 aa).

Residues 12 to 18 and 40 to 42 each bind GTP; these read GDEGKGK and GHT. The Proton acceptor role is filled by Asp13. Asp13 and Gly40 together coordinate Mg(2+). IMP is bound by residues 13 to 16, 38 to 41, Thr131, Arg145, Gln226, Thr241, and Arg305; these read DEGK and NAGH. Residue His41 is the Proton donor of the active site. 301–307 contacts substrate; sequence ATTGRKR. GTP contacts are provided by residues Arg307, 333-335, and 415-417; these read KLD and SVG.

It belongs to the adenylosuccinate synthetase family. Homodimer. The cofactor is Mg(2+).

It is found in the cytoplasm. The enzyme catalyses IMP + L-aspartate + GTP = N(6)-(1,2-dicarboxyethyl)-AMP + GDP + phosphate + 2 H(+). Its pathway is purine metabolism; AMP biosynthesis via de novo pathway; AMP from IMP: step 1/2. Plays an important role in the de novo pathway of purine nucleotide biosynthesis. Catalyzes the first committed step in the biosynthesis of AMP from IMP. This chain is Adenylosuccinate synthetase, found in Nitratidesulfovibrio vulgaris (strain DSM 19637 / Miyazaki F) (Desulfovibrio vulgaris).